Here is a 434-residue protein sequence, read N- to C-terminus: Pre-B-cell leukemia transcription factor 3 (434 aa).

The disordered stretch occupies residues 20–41; that stretch reads SVQGGMALPPPPHGHEGADGDG. The segment covering 32–41 has biased composition (basic and acidic residues); sequence HGHEGADGDG. A PBC domain is found at 41–234; that stretch reads GRKQDIGDIL…VMILRSRFLD (194 aa). Residues 48–127 are PBC-A; the sequence is DILHQIMTIT…EGVSGPEKGG (80 aa). The PBC-B stretch occupies residues 130–234; it reads AAAAAAAAAS…VMILRSRFLD (105 aa). The segment at residues 235-297 is a DNA-binding region (homeobox; TALE-type); it reads ARRKRRNFSK…NKRIRYKKNI (63 aa). The segment covering 326 to 341 has biased composition (low complexity); sequence NQTNSPTTPNSGSSGS. 2 disordered regions span residues 326–349 and 405–434; these read NQTN…NSGD and ANGG…DTSN. Residues 405–422 are compositionally biased toward polar residues; sequence ANGGWQDATTPSSVTSPT.

The protein belongs to the TALE/PBX homeobox family. Interacts with PBXIP1.

Its subcellular location is the nucleus. In terms of biological role, transcriptional activator that binds the sequence 5'-ATCAATCAA-3'. The protein is Pre-B-cell leukemia transcription factor 3 (Pbx3) of Mus musculus (Mouse).